We begin with the raw amino-acid sequence, 386 residues long: GTPase Obg (386 aa).

The 159-residue stretch at 4–162 (SNFVDYVKIY…MTVILELKLL (159 aa)) folds into the Obg domain. Positions 18–45 (KGGRGSTHMRREKYTPNGGPDGGDGGRG) are disordered. Residues 36-45 (GPDGGDGGRG) are compositionally biased toward gly residues. Residues 163–329 (ADVGLVGFPN…LKDILWTELN (167 aa)) form the OBG-type G domain. GTP-binding positions include 169-176 (GFPNAGKS), 194-198 (FTTLE), 216-219 (DIPG), 283-286 (TKSD), and 310-312 (SSV). S176 and T196 together coordinate Mg(2+). The interval 351–386 (ELKDMGEDEELDYEYEDDGDEDDLDYEYEEEDWEDK) is disordered. Acidic residues predominate over residues 356–386 (GEDEELDYEYEDDGDEDDLDYEYEEEDWEDK).

Belongs to the TRAFAC class OBG-HflX-like GTPase superfamily. OBG GTPase family. Monomer. Mg(2+) is required as a cofactor.

Its subcellular location is the cytoplasm. An essential GTPase which binds GTP, GDP and possibly (p)ppGpp with moderate affinity, with high nucleotide exchange rates and a fairly low GTP hydrolysis rate. Plays a role in control of the cell cycle, stress response, ribosome biogenesis and in those bacteria that undergo differentiation, in morphogenesis control. The chain is GTPase Obg from Bacteroides fragilis (strain YCH46).